The sequence spans 740 residues: Ion-translocating oxidoreductase complex subunit C (740 aa).

4Fe-4S ferredoxin-type domains follow at residues 369-397 (GEPQEEQSCIRCSACADACPVDLLPQQLY) and 407-436 (KATTHNIADCIECGACAWVCPSNIPLVQYF). Residues Cys-377, Cys-380, Cys-383, Cys-387, Cys-416, Cys-419, Cys-422, and Cys-426 each contribute to the [4Fe-4S] cluster site. Residues 598-716 (AKARKLEQQQ…EPEEQVDPRK (119 aa)) are disordered.

It belongs to the 4Fe4S bacterial-type ferredoxin family. RnfC subfamily. As to quaternary structure, the complex is composed of six subunits: RsxA, RsxB, RsxC, RsxD, RsxE and RsxG. Requires [4Fe-4S] cluster as cofactor.

The protein resides in the cell inner membrane. In terms of biological role, part of a membrane-bound complex that couples electron transfer with translocation of ions across the membrane. Required to maintain the reduced state of SoxR. The polypeptide is Ion-translocating oxidoreductase complex subunit C (Shigella flexneri serotype 5b (strain 8401)).